Reading from the N-terminus, the 264-residue chain is Sirohydrochlorin cobaltochelatase (264 aa).

Co-sirohydrochlorin contacts are provided by Gly-45, Ile-84, Ile-85, Asp-88, Glu-89, and Lys-92. Residue His-145 is the Proton acceptor of the active site. Residues His-145 and Glu-175 each coordinate Co(2+). Residues Leu-202, Val-203, and His-207 each contribute to the Co-sirohydrochlorin site. Residue His-207 coordinates Co(2+).

It belongs to the CbiK family. Homotrimer.

It catalyses the reaction Co-sirohydrochlorin + 2 H(+) = sirohydrochlorin + Co(2+). The catalysed reaction is Co-precorrin-2 + 3 H(+) = precorrin-2 + Co(2+). The protein operates within cofactor biosynthesis; adenosylcobalamin biosynthesis; cob(II)yrinate a,c-diamide from sirohydrochlorin (anaerobic route): step 1/10. Cobalt chelatase responsible for the insertion of cobalt during anaerobic cobalamin biosynthesis. Can catalyze the insertion of Co(2+) into either sirohydrochlorin or precorrin-2. It is not clear which is the natural substrate in Salmonella. This chain is Sirohydrochlorin cobaltochelatase, found in Salmonella typhimurium (strain LT2 / SGSC1412 / ATCC 700720).